Consider the following 1814-residue polypeptide: U3 small nucleolar RNA-associated protein 10 (1814 aa).

The HEAT 1 repeat unit spans residues 583–620 (LDFQALLPFLLVALTDASERVRREAAAALAAVGSLYKK). 2 helical membrane passes run 942–962 (IQSG…AIVN) and 998–1018 (ALLL…HSVM). 4 HEAT repeats span residues 1042-1079 (QTID…AFEH), 1249-1286 (LTLV…QNPE), 1293-1331 (IRVL…KYGK), and 1770-1807 (ALLP…VLGE).

The protein belongs to the HEATR1/UTP10 family. As to quaternary structure, component of the ribosomal small subunit (SSU) processome.

The protein resides in the nucleus. The protein localises to the nucleolus. It is found in the membrane. Involved in nucleolar processing of pre-18S ribosomal RNA. Involved in ribosome biosynthesis. The polypeptide is U3 small nucleolar RNA-associated protein 10 (Neosartorya fischeri (strain ATCC 1020 / DSM 3700 / CBS 544.65 / FGSC A1164 / JCM 1740 / NRRL 181 / WB 181) (Aspergillus fischerianus)).